Reading from the N-terminus, the 731-residue chain is Alpha-xylosidase (731 aa).

Catalysis depends on residues Asp353 and Glu356. Catalysis depends on Asp428, which acts as the Proton donor.

It belongs to the glycosyl hydrolase 31 family. Monomer.

It carries out the reaction Hydrolysis of terminal, non-reducing alpha-D-xylose residues with release of alpha-D-xylose.. Functionally, catalyzes the liberation of alpha-xylose from the non-reducing terminal glucose of xyloglucan oligosaccharides. Has high hydrolytic activity on the disaccharide isoprimeverose. Follows a retaining mechanism of substrate hydrolysis. This is Alpha-xylosidase (xylS) from Saccharolobus solfataricus (strain ATCC 35092 / DSM 1617 / JCM 11322 / P2) (Sulfolobus solfataricus).